We begin with the raw amino-acid sequence, 143 residues long: Large ribosomal subunit protein bL17 (143 aa).

This sequence belongs to the bacterial ribosomal protein bL17 family. Part of the 50S ribosomal subunit. Contacts protein L32.

The protein is Large ribosomal subunit protein bL17 of Bartonella quintana (strain Toulouse) (Rochalimaea quintana).